The chain runs to 271 residues: Bis(5'-nucleosyl)-tetraphosphatase, symmetrical (271 aa).

It belongs to the Ap4A hydrolase family.

It catalyses the reaction P(1),P(4)-bis(5'-adenosyl) tetraphosphate + H2O = 2 ADP + 2 H(+). In terms of biological role, hydrolyzes diadenosine 5',5'''-P1,P4-tetraphosphate to yield ADP. In Aliivibrio fischeri (strain MJ11) (Vibrio fischeri), this protein is Bis(5'-nucleosyl)-tetraphosphatase, symmetrical.